The chain runs to 216 residues: Probable GTP-binding protein EngB (216 aa).

In terms of domain architecture, EngB-type G spans 26–200; it reads EGIEIAFAGR…RAKLDTWFAP (175 aa). Residues 34-41, 61-65, 79-82, 146-149, and 179-181 each bind GTP; these read GRSNAGKS, GRTQL, DLPG, TKAD, and YSS. The Mg(2+) site is built by S41 and T63.

Belongs to the TRAFAC class TrmE-Era-EngA-EngB-Septin-like GTPase superfamily. EngB GTPase family. It depends on Mg(2+) as a cofactor.

Its function is as follows. Necessary for normal cell division and for the maintenance of normal septation. This is Probable GTP-binding protein EngB from Vibrio vulnificus (strain CMCP6).